The primary structure comprises 70 residues: Cytochrome c oxidase subunit 8B, mitochondrial (70 aa).

The N-terminal 24 residues, 1 to 24, are a transit peptide targeting the mitochondrion; that stretch reads MPRLPPILRLLQAPEKYTVIPKAR. Topologically, residues 25–35 are mitochondrial matrix; it reads ISSKPAKSPTS. A helical membrane pass occupies residues 36-59; the sequence is AMDQAVGMSVIIAGFMVPAGWVLS. The Mitochondrial intermembrane portion of the chain corresponds to 60–70; the sequence is HLESYKRSSAA.

This sequence belongs to the cytochrome c oxidase VIII family. In terms of assembly, component of the cytochrome c oxidase (complex IV, CIV), a multisubunit enzyme composed of 14 subunits. The complex is composed of a catalytic core of 3 subunits MT-CO1, MT-CO2 and MT-CO3, encoded in the mitochondrial DNA, and 11 supernumerary subunits COX4I, COX5A, COX5B, COX6A, COX6B, COX6C, COX7A, COX7B, COX7C, COX8 and NDUFA4, which are encoded in the nuclear genome. The complex exists as a monomer or a dimer and forms supercomplexes (SCs) in the inner mitochondrial membrane with NADH-ubiquinone oxidoreductase (complex I, CI) and ubiquinol-cytochrome c oxidoreductase (cytochrome b-c1 complex, complex III, CIII), resulting in different assemblies (supercomplex SCI(1)III(2)IV(1) and megacomplex MCI(2)III(2)IV(2)).

It is found in the mitochondrion inner membrane. It functions in the pathway energy metabolism; oxidative phosphorylation. Component of the cytochrome c oxidase, the last enzyme in the mitochondrial electron transport chain which drives oxidative phosphorylation. The respiratory chain contains 3 multisubunit complexes succinate dehydrogenase (complex II, CII), ubiquinol-cytochrome c oxidoreductase (cytochrome b-c1 complex, complex III, CIII) and cytochrome c oxidase (complex IV, CIV), that cooperate to transfer electrons derived from NADH and succinate to molecular oxygen, creating an electrochemical gradient over the inner membrane that drives transmembrane transport and the ATP synthase. Cytochrome c oxidase is the component of the respiratory chain that catalyzes the reduction of oxygen to water. Electrons originating from reduced cytochrome c in the intermembrane space (IMS) are transferred via the dinuclear copper A center (CU(A)) of subunit 2 and heme A of subunit 1 to the active site in subunit 1, a binuclear center (BNC) formed by heme A3 and copper B (CU(B)). The BNC reduces molecular oxygen to 2 water molecules using 4 electrons from cytochrome c in the IMS and 4 protons from the mitochondrial matrix. This Rattus norvegicus (Rat) protein is Cytochrome c oxidase subunit 8B, mitochondrial (Cox8b).